Reading from the N-terminus, the 258-residue chain is Imidazole glycerol phosphate synthase subunit HisF (258 aa).

Residues Asp-11 and Asp-130 contribute to the active site.

Belongs to the HisA/HisF family. Heterodimer of HisH and HisF.

It is found in the cytoplasm. It carries out the reaction 5-[(5-phospho-1-deoxy-D-ribulos-1-ylimino)methylamino]-1-(5-phospho-beta-D-ribosyl)imidazole-4-carboxamide + L-glutamine = D-erythro-1-(imidazol-4-yl)glycerol 3-phosphate + 5-amino-1-(5-phospho-beta-D-ribosyl)imidazole-4-carboxamide + L-glutamate + H(+). The protein operates within amino-acid biosynthesis; L-histidine biosynthesis; L-histidine from 5-phospho-alpha-D-ribose 1-diphosphate: step 5/9. Functionally, IGPS catalyzes the conversion of PRFAR and glutamine to IGP, AICAR and glutamate. The HisF subunit catalyzes the cyclization activity that produces IGP and AICAR from PRFAR using the ammonia provided by the HisH subunit. This Shigella flexneri serotype 5b (strain 8401) protein is Imidazole glycerol phosphate synthase subunit HisF.